Reading from the N-terminus, the 82-residue chain is Small ribosomal subunit protein eS21 (82 aa).

Belongs to the eukaryotic ribosomal protein eS21 family.

This Oryza sativa subsp. japonica (Rice) protein is Small ribosomal subunit protein eS21 (RPS21).